A 338-amino-acid chain; its full sequence is Ketol-acid reductoisomerase (NADP(+)) (338 aa).

The KARI N-terminal Rossmann domain occupies 1–181 (MKVFYDKDCD…GGGKAGIIET (181 aa)). NADP(+)-binding positions include 24–27 (YGSQ), Arg47, and Ser52. Residue His107 is part of the active site. Residue Gly133 coordinates NADP(+). The 146-residue stretch at 182–327 (NFREETETDL…GKLRAMMPWI (146 aa)) folds into the KARI C-terminal knotted domain. Mg(2+) contacts are provided by Asp190, Glu194, Glu226, and Glu230. Ser251 is a substrate binding site.

Belongs to the ketol-acid reductoisomerase family. The cofactor is Mg(2+).

The enzyme catalyses (2R)-2,3-dihydroxy-3-methylbutanoate + NADP(+) = (2S)-2-acetolactate + NADPH + H(+). It catalyses the reaction (2R,3R)-2,3-dihydroxy-3-methylpentanoate + NADP(+) = (S)-2-ethyl-2-hydroxy-3-oxobutanoate + NADPH + H(+). It participates in amino-acid biosynthesis; L-isoleucine biosynthesis; L-isoleucine from 2-oxobutanoate: step 2/4. Its pathway is amino-acid biosynthesis; L-valine biosynthesis; L-valine from pyruvate: step 2/4. In terms of biological role, involved in the biosynthesis of branched-chain amino acids (BCAA). Catalyzes an alkyl-migration followed by a ketol-acid reduction of (S)-2-acetolactate (S2AL) to yield (R)-2,3-dihydroxy-isovalerate. In the isomerase reaction, S2AL is rearranged via a Mg-dependent methyl migration to produce 3-hydroxy-3-methyl-2-ketobutyrate (HMKB). In the reductase reaction, this 2-ketoacid undergoes a metal-dependent reduction by NADPH to yield (R)-2,3-dihydroxy-isovalerate. This chain is Ketol-acid reductoisomerase (NADP(+)), found in Polaromonas naphthalenivorans (strain CJ2).